The following is a 351-amino-acid chain: Cysteine-rich receptor-like protein kinase 45 (351 aa).

Residues 37 to 287 (NDFSELVGRG…EILRYIHIAL (251 aa)) enclose the Protein kinase domain. ATP is bound by residues 43 to 51 (VGRGGFGFV) and K65. Y110 is modified (phosphotyrosine). The active-site Proton acceptor is D162. Phosphothreonine is present on residues T197 and T202. The residue at position 210 (Y210) is a Phosphotyrosine.

Belongs to the protein kinase superfamily. Ser/Thr protein kinase family. CRK subfamily. In terms of assembly, interacts with CRK36. In terms of processing, autophosphorylated and phosphorylated by CRK36.

The protein resides in the cytoplasm. Its subcellular location is the cytosol. It catalyses the reaction L-seryl-[protein] + ATP = O-phospho-L-seryl-[protein] + ADP + H(+). It carries out the reaction L-threonyl-[protein] + ATP = O-phospho-L-threonyl-[protein] + ADP + H(+). Forms a complex with CRK36 that may negatively control abscisic acid (ABA) and osmotic stress signal transduction. Involved in plant response to ABA during seed germination, early seedling growth and responses to abiotic stresses by inducing the expression of ABA-responsive genes and stress-inducible genes. Acts as a positive regulator in disease resistance, downstream of NPR1 and WRKY70. This chain is Cysteine-rich receptor-like protein kinase 45, found in Arabidopsis thaliana (Mouse-ear cress).